Reading from the N-terminus, the 62-residue chain is Cecropin-A (62 aa).

A signal peptide spans Met1–Ala20. The propeptide at Val21–Pro24 is removed by a dipeptidylpeptidase. Thr60 carries the post-translational modification Threonine amide.

The protein belongs to the cecropin family.

It localises to the secreted. In terms of biological role, has antibacterial activity. The sequence is that of Cecropin-A from Trichoplusia ni (Cabbage looper).